Reading from the N-terminus, the 458-residue chain is Argininosuccinate lyase (458 aa).

This sequence belongs to the lyase 1 family. Argininosuccinate lyase subfamily.

The protein localises to the cytoplasm. It carries out the reaction 2-(N(omega)-L-arginino)succinate = fumarate + L-arginine. It participates in amino-acid biosynthesis; L-arginine biosynthesis; L-arginine from L-ornithine and carbamoyl phosphate: step 3/3. The polypeptide is Argininosuccinate lyase (Salmonella agona (strain SL483)).